A 346-amino-acid polypeptide reads, in one-letter code: Peripherin-2 (346 aa).

Over 1–24 the chain is Cytoplasmic; the sequence is MALMKTKFNLKRRVKLAQGLWLMN. A helical membrane pass occupies residues 25–43; it reads WCCVLAGIALFSMGVFLKI. Over 44 to 61 the chain is Lumenal; the sequence is ELRKRSEVMDNDESHFVP. The chain crosses the membrane as a helical span at residues 62-80; the sequence is NSLILMGSLACALNAFPGK. Topologically, residues 81-99 are cytoplasmic; the sequence is ICYDSLDPTKFPRWKPMLK. A helical transmembrane segment spans residues 100-123; the sequence is PYLIICLIFNIFIFFTGVVCFLTR. The Lumenal portion of the chain corresponds to 124 to 264; that stretch reads GSLESTLAHG…LNYYTSMMSS (141 aa). An N-linked (GlcNAc...) asparagine glycan is attached at Asn-229. A helical transmembrane segment spans residues 265–290; that stretch reads MGGMVFLVWIMEMAVMIGLRFLHTCL. At 291 to 346 the chain is on the cytoplasmic side; that stretch reads ETIANPEDPECESEGWILEKSLKDTIKSSWELVKSMGKLNKVETAGGEEAGVATVS.

The protein belongs to the PRPH2/ROM1 family. In terms of assembly, homodimer; disulfide-linked. In terms of tissue distribution, found in both rod and cone photoreceptors. Specifically in the rims and incisures of rod and cone outer segment disks.

The protein localises to the membrane. Functionally, may be involved in the morphogenesis of retina outer segment disks and the development and maintenance of the retina ultrastructure. This Xenopus laevis (African clawed frog) protein is Peripherin-2 (prph2).